Reading from the N-terminus, the 352-residue chain is Chorismate synthase (352 aa).

Position 48 (Arg48) interacts with NADP(+). Residues 125 to 127, 238 to 239, Gly278, 293 to 297, and Arg319 contribute to the FMN site; these read RSS, NA, and KPTSS.

Belongs to the chorismate synthase family. In terms of assembly, homotetramer. FMNH2 is required as a cofactor.

It catalyses the reaction 5-O-(1-carboxyvinyl)-3-phosphoshikimate = chorismate + phosphate. It functions in the pathway metabolic intermediate biosynthesis; chorismate biosynthesis; chorismate from D-erythrose 4-phosphate and phosphoenolpyruvate: step 7/7. Functionally, catalyzes the anti-1,4-elimination of the C-3 phosphate and the C-6 proR hydrogen from 5-enolpyruvylshikimate-3-phosphate (EPSP) to yield chorismate, which is the branch point compound that serves as the starting substrate for the three terminal pathways of aromatic amino acid biosynthesis. This reaction introduces a second double bond into the aromatic ring system. The sequence is that of Chorismate synthase from Legionella pneumophila (strain Paris).